The following is a 232-amino-acid chain: Glycerol-3-phosphate acyltransferase 4 (232 aa).

Helical transmembrane passes span V4–L24, L54–L76, L80–F99, G107–L127, V143–V163, and T168–P188.

This sequence belongs to the PlsY family. As to quaternary structure, probably interacts with PlsX.

The protein resides in the cell membrane. The catalysed reaction is an acyl phosphate + sn-glycerol 3-phosphate = a 1-acyl-sn-glycero-3-phosphate + phosphate. Its pathway is lipid metabolism; phospholipid metabolism. Catalyzes the transfer of an acyl group from acyl-phosphate (acyl-PO(4)) to glycerol-3-phosphate (G3P) to form lysophosphatidic acid (LPA). This enzyme utilizes acyl-phosphate as fatty acyl donor, but not acyl-CoA or acyl-ACP. The protein is Glycerol-3-phosphate acyltransferase 4 of Dehalococcoides mccartyi (strain CBDB1).